A 645-amino-acid polypeptide reads, in one-letter code: Acetyl-coenzyme A synthetase (645 aa).

Residues 190–193 (RGGR) and T309 each bind CoA. ATP-binding positions include 385-387 (GEP), 409-414 (DTWWQT), D498, and R513. S521 contacts CoA. R524 serves as a coordination point for ATP. Mg(2+)-binding residues include V535, H537, and V540. A CoA-binding site is contributed by R582. K607 is subject to N6-acetyllysine.

The protein belongs to the ATP-dependent AMP-binding enzyme family. Mg(2+) serves as cofactor. Post-translationally, acetylated. Deacetylation by the SIR2-homolog deacetylase activates the enzyme.

The catalysed reaction is acetate + ATP + CoA = acetyl-CoA + AMP + diphosphate. Catalyzes the conversion of acetate into acetyl-CoA (AcCoA), an essential intermediate at the junction of anabolic and catabolic pathways. AcsA undergoes a two-step reaction. In the first half reaction, AcsA combines acetate with ATP to form acetyl-adenylate (AcAMP) intermediate. In the second half reaction, it can then transfer the acetyl group from AcAMP to the sulfhydryl group of CoA, forming the product AcCoA. In Methylocella silvestris (strain DSM 15510 / CIP 108128 / LMG 27833 / NCIMB 13906 / BL2), this protein is Acetyl-coenzyme A synthetase.